Reading from the N-terminus, the 354-residue chain is Ubiquitin-conjugating enzyme E2 Z (354 aa).

The disordered stretch occupies residues 1–21; the sequence is MAESPTEEAATAGAGAAGPGA. A UBC core domain is found at 99–253; sequence QCLLRIKRDI…IRHETIRVAV (155 aa). The Glycyl thioester intermediate role is filled by C188. Residues 332–354 form a disordered region; that stretch reads NAEMDSDSSSSGTETDLHGSLRV. At S337 the chain carries Phosphoserine.

The protein belongs to the ubiquitin-conjugating enzyme family. Widely expressed. Highly in placenta, pancreas, spleen and testis.

The protein resides in the cytoplasm. Its subcellular location is the nucleus. The catalysed reaction is S-ubiquitinyl-[E1 ubiquitin-activating enzyme]-L-cysteine + [E2 ubiquitin-conjugating enzyme]-L-cysteine = [E1 ubiquitin-activating enzyme]-L-cysteine + S-ubiquitinyl-[E2 ubiquitin-conjugating enzyme]-L-cysteine.. The protein operates within protein modification; protein ubiquitination. In terms of biological role, catalyzes the covalent attachment of ubiquitin to other proteins. Specific substrate for UBA6, not charged with ubiquitin by UBE1. May be involved in apoptosis regulation. The sequence is that of Ubiquitin-conjugating enzyme E2 Z (UBE2Z) from Homo sapiens (Human).